Here is a 382-residue protein sequence, read N- to C-terminus: Mannitol-1-phosphate 5-dehydrogenase (382 aa).

Residue 3–14 (ALHFGAGNIGRG) coordinates NAD(+).

Belongs to the mannitol dehydrogenase family.

It carries out the reaction D-mannitol 1-phosphate + NAD(+) = beta-D-fructose 6-phosphate + NADH + H(+). This Salmonella enteritidis PT4 (strain P125109) protein is Mannitol-1-phosphate 5-dehydrogenase.